The chain runs to 599 residues: Histone-arginine methyltransferase CARMER (599 aa).

In terms of domain architecture, SAM-dependent MTase PRMT-type spans 127–434 (ASQYFQFYGY…QRQSYDVEID (308 aa)). Positions 140, 149, 173, 195, 224, and 252 each coordinate S-adenosyl-L-methionine. Arg487 bears the Asymmetric dimethylarginine; by autocatalysis mark.

The protein belongs to the class I-like SAM-binding methyltransferase superfamily. Protein arginine N-methyltransferase family. Homodimer. The dimethylated protein is the major form.

It localises to the cytoplasm. The protein resides in the nucleus. It catalyses the reaction L-arginyl-[protein] + 2 S-adenosyl-L-methionine = N(omega),N(omega)-dimethyl-L-arginyl-[protein] + 2 S-adenosyl-L-homocysteine + 2 H(+). Methylates (mono- and asymmetric dimethylation) the guanidino nitrogens of arginyl residues in proteins. May methylate histone H3 at 'Arg-17' and activate transcription via chromatin remodeling. The protein is Histone-arginine methyltransferase CARMER (Art4) of Culex quinquefasciatus (Southern house mosquito).